We begin with the raw amino-acid sequence, 210 residues long: Na(+)-translocating NADH-quinone reductase subunit D (210 aa).

Helical transmembrane passes span 42–62 (FVMT…VSLI), 72–92 (IIVQ…ILKA), 103–123 (VFVG…AFAM), 131–151 (LIDG…VGFF), and 178–198 (NGLM…IWAI).

The protein belongs to the NqrDE/RnfAE family. In terms of assembly, composed of six subunits; NqrA, NqrB, NqrC, NqrD, NqrE and NqrF.

It localises to the cell inner membrane. The enzyme catalyses a ubiquinone + n Na(+)(in) + NADH + H(+) = a ubiquinol + n Na(+)(out) + NAD(+). NQR complex catalyzes the reduction of ubiquinone-1 to ubiquinol by two successive reactions, coupled with the transport of Na(+) ions from the cytoplasm to the periplasm. NqrA to NqrE are probably involved in the second step, the conversion of ubisemiquinone to ubiquinol. This Vibrio vulnificus (strain CMCP6) protein is Na(+)-translocating NADH-quinone reductase subunit D.